We begin with the raw amino-acid sequence, 365 residues long: tRNA/tmRNA (uracil-C(5))-methyltransferase (365 aa).

S-adenosyl-L-methionine-binding residues include glutamine 189, tyrosine 217, asparagine 222, glutamate 238, and aspartate 298. Cysteine 323 functions as the Nucleophile in the catalytic mechanism. Residue glutamate 357 is the Proton acceptor of the active site.

The protein belongs to the class I-like SAM-binding methyltransferase superfamily. RNA M5U methyltransferase family. TrmA subfamily.

It catalyses the reaction uridine(54) in tRNA + S-adenosyl-L-methionine = 5-methyluridine(54) in tRNA + S-adenosyl-L-homocysteine + H(+). The catalysed reaction is uridine(341) in tmRNA + S-adenosyl-L-methionine = 5-methyluridine(341) in tmRNA + S-adenosyl-L-homocysteine + H(+). Its function is as follows. Dual-specificity methyltransferase that catalyzes the formation of 5-methyluridine at position 54 (m5U54) in all tRNAs, and that of position 341 (m5U341) in tmRNA (transfer-mRNA). The chain is tRNA/tmRNA (uracil-C(5))-methyltransferase from Saccharophagus degradans (strain 2-40 / ATCC 43961 / DSM 17024).